Reading from the N-terminus, the 273-residue chain is Putative pyruvate, phosphate dikinase regulatory protein (273 aa).

An ADP-binding site is contributed by 151–158 (GVSRTSKT).

Belongs to the pyruvate, phosphate/water dikinase regulatory protein family. PDRP subfamily.

It carries out the reaction N(tele)-phospho-L-histidyl/L-threonyl-[pyruvate, phosphate dikinase] + ADP = N(tele)-phospho-L-histidyl/O-phospho-L-threonyl-[pyruvate, phosphate dikinase] + AMP + H(+). The catalysed reaction is N(tele)-phospho-L-histidyl/O-phospho-L-threonyl-[pyruvate, phosphate dikinase] + phosphate + H(+) = N(tele)-phospho-L-histidyl/L-threonyl-[pyruvate, phosphate dikinase] + diphosphate. Functionally, bifunctional serine/threonine kinase and phosphorylase involved in the regulation of the pyruvate, phosphate dikinase (PPDK) by catalyzing its phosphorylation/dephosphorylation. This is Putative pyruvate, phosphate dikinase regulatory protein from Desulfitobacterium hafniense (strain DSM 10664 / DCB-2).